A 234-amino-acid polypeptide reads, in one-letter code: Glycerol-3-phosphate acyltransferase (234 aa).

6 consecutive transmembrane segments (helical) span residues 4-24 (LLAI…LIAG), 56-76 (TVTL…VAFF), 90-110 (VALR…TVFA), 122-142 (AGML…VFLL), 152-172 (VASI…KYLF), and 191-211 (FHDS…IAII).

Belongs to the PlsY family. Probably interacts with PlsX.

It is found in the cell inner membrane. It carries out the reaction an acyl phosphate + sn-glycerol 3-phosphate = a 1-acyl-sn-glycero-3-phosphate + phosphate. It participates in lipid metabolism; phospholipid metabolism. Functionally, catalyzes the transfer of an acyl group from acyl-phosphate (acyl-PO(4)) to glycerol-3-phosphate (G3P) to form lysophosphatidic acid (LPA). This enzyme utilizes acyl-phosphate as fatty acyl donor, but not acyl-CoA or acyl-ACP. This is Glycerol-3-phosphate acyltransferase from Chlorobium chlorochromatii (strain CaD3).